The primary structure comprises 384 residues: Lipoyl synthase 2, chloroplastic (384 aa).

The transit peptide at 1 to 48 (MAAYCSRVYHHHPVSPSTMQGSLARPSIHAGSASLTFRARPNSVSIVR) directs the protein to the chloroplast. 7 residues coordinate [4Fe-4S] cluster: cysteine 108, cysteine 113, cysteine 119, cysteine 145, cysteine 149, cysteine 152, and serine 360. The Radical SAM core domain occupies 128-349 (GDGDGIATAT…KEYGESLGFL (222 aa)).

The protein belongs to the radical SAM superfamily. Lipoyl synthase family. [4Fe-4S] cluster serves as cofactor.

The protein localises to the plastid. It localises to the chloroplast. The catalysed reaction is [[Fe-S] cluster scaffold protein carrying a second [4Fe-4S](2+) cluster] + N(6)-octanoyl-L-lysyl-[protein] + 2 oxidized [2Fe-2S]-[ferredoxin] + 2 S-adenosyl-L-methionine + 4 H(+) = [[Fe-S] cluster scaffold protein] + N(6)-[(R)-dihydrolipoyl]-L-lysyl-[protein] + 4 Fe(3+) + 2 hydrogen sulfide + 2 5'-deoxyadenosine + 2 L-methionine + 2 reduced [2Fe-2S]-[ferredoxin]. It functions in the pathway protein modification; protein lipoylation via endogenous pathway; protein N(6)-(lipoyl)lysine from octanoyl-[acyl-carrier-protein]: step 2/2. Its function is as follows. Catalyzes the radical-mediated insertion of two sulfur atoms into the C-6 and C-8 positions of the octanoyl moiety bound to the lipoyl domains of lipoate-dependent enzymes, thereby converting the octanoylated domains into lipoylated derivatives. In Oryza sativa subsp. indica (Rice), this protein is Lipoyl synthase 2, chloroplastic.